The primary structure comprises 526 residues: Glucose-6-phosphate 1-dehydrogenase (526 aa).

NADP(+) contacts are provided by residues 50 to 57, Arg84, and Lys184; that span reads GASGDLAK. Residues Lys184, 214–218, Glu252, and Asp271 each bind D-glucose 6-phosphate; that span reads HYLGK. His276 (proton acceptor) is an active-site residue. Arg370 contributes to the NADP(+) binding site. D-glucose 6-phosphate contacts are provided by Lys373 and Arg378. Positions 379, 383, and 406 each coordinate NADP(+). Gln408 lines the D-glucose 6-phosphate pocket. NADP(+) contacts are provided by residues 414–416, 434–436, Arg500, Tyr516, and Trp522; these read YFK and DLT.

Belongs to the glucose-6-phosphate dehydrogenase family.

Its subcellular location is the cytoplasm. It localises to the cytosol. It catalyses the reaction D-glucose 6-phosphate + NADP(+) = 6-phospho-D-glucono-1,5-lactone + NADPH + H(+). It functions in the pathway carbohydrate degradation; pentose phosphate pathway; D-ribulose 5-phosphate from D-glucose 6-phosphate (oxidative stage): step 1/3. In terms of biological role, cytosolic glucose-6-phosphate dehydrogenase that catalyzes the first and rate-limiting step of the oxidative branch within the pentose phosphate pathway/shunt, an alternative route to glycolysis for the dissimilation of carbohydrates and a major source of reducing power and metabolic intermediates for fatty acid and nucleic acid biosynthetic processes. This Ceratitis capitata (Mediterranean fruit fly) protein is Glucose-6-phosphate 1-dehydrogenase (ZW).